We begin with the raw amino-acid sequence, 242 residues long: Coiled-coil domain-containing protein 107 (242 aa).

The first 24 residues, 1-24 (MEGAGPVLSILGLLLVSAPFGVLG), serve as a signal peptide directing secretion. The disordered stretch occupies residues 27–62 (PSADLGAHPERGSQVSPGTTEPRRQPPPKDQRERAR). The segment covering 47–62 (EPRRQPPPKDQRERAR) has biased composition (basic and acidic residues). Residues 65–85 (SLSLGALYTAAVVAFVLFKCL) traverse the membrane as a helical segment. A coiled-coil region spans residues 97–132 (EKNKKKSSQSEQQLVQLTQQLAQTEQHLNHLMTQLD). The segment at 186–210 (KEDQEAGNSQAWEEPITWSPETRNL) is disordered.

The protein localises to the membrane. The protein is Coiled-coil domain-containing protein 107 (Ccdc107) of Mus musculus (Mouse).